A 454-amino-acid chain; its full sequence is tRNA modification GTPase MnmE (454 aa).

Residues arginine 23, glutamate 80, and lysine 120 each contribute to the (6S)-5-formyl-5,6,7,8-tetrahydrofolate site. The TrmE-type G domain maps to glycine 216–glycine 377. Residue asparagine 226 coordinates K(+). Residues asparagine 226 to serine 231, threonine 245 to threonine 251, aspartate 270 to glycine 273, asparagine 335 to aspartate 338, and serine 358 to arginine 360 each bind GTP. Serine 230 contributes to the Mg(2+) binding site. Residues threonine 245, isoleucine 247, and threonine 250 each contribute to the K(+) site. A Mg(2+)-binding site is contributed by threonine 251. Lysine 454 is a (6S)-5-formyl-5,6,7,8-tetrahydrofolate binding site.

The protein belongs to the TRAFAC class TrmE-Era-EngA-EngB-Septin-like GTPase superfamily. TrmE GTPase family. As to quaternary structure, homodimer. Heterotetramer of two MnmE and two MnmG subunits. K(+) is required as a cofactor.

The protein localises to the cytoplasm. Its function is as follows. Exhibits a very high intrinsic GTPase hydrolysis rate. Involved in the addition of a carboxymethylaminomethyl (cmnm) group at the wobble position (U34) of certain tRNAs, forming tRNA-cmnm(5)s(2)U34. The sequence is that of tRNA modification GTPase MnmE from Pectobacterium carotovorum subsp. carotovorum (strain PC1).